We begin with the raw amino-acid sequence, 107 residues long: High mobility group protein HMG-I/HMG-Y (107 aa).

Residues 1–107 (MSESSSKSSQ…ISQESSEEEQ (107 aa)) form a disordered region. N-acetylserine is present on Ser2. At Lys7 the chain carries N6-acetyllysine. Position 8 is an ADP-ribosylserine (Ser8). Ser9 carries the post-translational modification ADP-ribosylserine; alternate. The residue at position 9 (Ser9) is a Phosphoserine; alternate. Residue Lys15 is modified to N6-acetyllysine; alternate. A Glycyl lysine isopeptide (Lys-Gly) (interchain with G-Cter in SUMO2); alternate cross-link involves residue Lys15. The segment covering 15 to 24 (KQEKDGTEKR) has biased composition (basic and acidic residues). The a.T hook 1 DNA-binding region spans 21 to 31 (TEKRGRGRPRK). Arg26 carries the asymmetric dimethylarginine; alternate modification. Arg26 is subject to Omega-N-methylarginine; alternate. The residue at position 26 (Arg26) is a Symmetric dimethylarginine; alternate. Ser36 bears the Phosphoserine; by HIPK2 and CDC2 mark. 2 positions are modified to phosphothreonine: Thr39 and Val42. Phosphoserine is present on residues Ser44 and Ser49. Thr53 is modified (phosphothreonine; by HIPK2 and CDC2). The segment at residues 53-63 (TPKRPRGRPKG) is a DNA-binding region (a.T hook 2). Positions 53-77 (TPKRPRGRPKGSKNKGAAKTRKTTT) are interaction with HIPK2. Residues 55-74 (KRPRGRPKGSKNKGAAKTRK) show a composition bias toward basic residues. An asymmetric dimethylarginine; by PRMT6; alternate mark is found at Arg58 and Arg60. 2 positions are modified to omega-N-methylarginine; by PRMT6; alternate: Arg58 and Arg60. A Phosphothreonine modification is found at Lys67. At Thr78 the chain carries Phosphothreonine; by HIPK2 and CDC2. The a.T hook 3 DNA-binding region spans 78–89 (TPGRKPRGRPKK). Residues 93–107 (EEEEGISQESSEEEQ) show a composition bias toward acidic residues. Ser99 bears the Phosphoserine mark. 2 positions are modified to phosphoserine; by CK: Ser102 and Ser103.

It belongs to the HMGA family. As to quaternary structure, interacts with HIPK2. Constitutively phosphorylated on two or three sites. Hyperphosphorylated at early stages of apoptosis, followed by dephosphorylation and methylation, which coincides with chromatin condensation. Isoforms HMG-I and HMG-Y can be phosphorylated by HIPK2. Phosphorylation of HMG-I at Ser-36, Thr-53 and Thr-78 and of HMG-Y at Thr-42 and Thr-67 by HIPK2 modulates DNA-binding affinity. Post-translationally, HMG-Y is not methylated. In terms of processing, methylation at Arg-58 is mutually exclusive with methylation at Arg-60.

It is found in the nucleus. The protein resides in the chromosome. In terms of biological role, HMG-I/Y bind preferentially to the minor groove of A+T rich regions in double-stranded DNA. It is suggested that these proteins could function in nucleosome phasing and in the 3'-end processing of mRNA transcripts. They are also involved in the transcription regulation of genes containing, or in close proximity to A+T-rich regions. In Homo sapiens (Human), this protein is High mobility group protein HMG-I/HMG-Y (HMGA1).